The primary structure comprises 878 residues: Protein argonaute 6 (878 aa).

Low complexity predominate over residues 1 to 17 (METSSSLPLSPISIEPE). A disordered region spans residues 1 to 25 (METSSSLPLSPISIEPEQPSHRDYD). Positions 259–372 (PVIEFLKANQ…LPLEFCNLVS (114 aa)) constitute a PAZ domain. The region spanning 541–851 (FILCILPERK…AAAQVAQFTK (311 aa)) is the Piwi domain.

This sequence belongs to the argonaute family. Ago subfamily. In terms of tissue distribution, expressed in roots, cotyledons and shoot meristematic region.

It localises to the nucleus. Involved in transcriptional gene silencing (TGS). Component of the RISC complex that associate with the small interfering RNA (siRNA) pathway involved in direct cytosine methylation at endogenous DNA repeats. Required for the accumulation of specific siRNAs derived from transgene and heterochromatin-related endogenous loci. Involved in RNA-directed DNA methylation (RdDM) at specific endogenous loci. Probably not required for the accumulation of siRNAs derived from transgene inverted repeats that induce post-transcriptional gene silencing (PTGS). Associates mainly with small RNAs of 24 nucleotide in length and preferentially recruits small RNAs with a 5' terminal adenosine. Targeted by turnip yellows virus (TuYV) protein P0 (via F-box-like domain) for probable proteasome degradation and thereby inactivating AGO6 function in RNA silencing. This chain is Protein argonaute 6 (AGO6), found in Arabidopsis thaliana (Mouse-ear cress).